The following is a 213-amino-acid chain: uncharacterized protein (213 aa).

Residues 22–42 (WFGLSMVSIAVIFGPLTGAHV) traverse the membrane as a helical segment. The NPA 1 signature appears at 43–45 (NPA). Transmembrane regions (helical) follow at residues 63-83 (VYII…WLLF), 112-132 (NLLS…TLNH), and 138-158 (GVAM…FGGL). An NPA 2 motif is present at residues 164–166 (NPA). A helical transmembrane segment spans residues 188-208 (FDYAWVPVLRPVIGAILAAWL).

The protein belongs to the MIP/aquaporin (TC 1.A.8) family.

The protein localises to the cell membrane. This is an uncharacterized protein from Haemophilus influenzae (strain ATCC 51907 / DSM 11121 / KW20 / Rd).